Here is a 394-residue protein sequence, read N- to C-terminus: Probable glycosyltransferase FCK3 (394 aa).

It belongs to the afumC glycosyltransferase family.

It functions in the pathway secondary metabolite biosynthesis. In terms of biological role, probable glycosyl transferase; part of the gene cluster that mediates the biosynthesis of cytokinins such as fusatin, fusatinic acids or 8-oxofusatin, known for their growth promoting and anti-senescence activities toward host plants. FCK1 is a bifunctional enzyme that performs the first steps in the biosynthesis of Fusarium cytokinins. It first condenses adenosine monophosphate (AMP) with dimethylallyl diphosphate (DMAPP) to yield isoprenyl adenosine monophosphate. It then catalyzes the removal of the phosphoribose to produce isopentenylaldehyde. The cytochrome P450 monooxygenase then converts isopentenylaldehyde to trans-zeatin. A condensation step converts trans-zeatin to fusatin which is further modified to produce fusatinic acid. The mechanism for oxidation of fusatin to fusatinic acid remains unknown. 8-oxofusatin could be produced through several pathways, via direct oxygenation of fusatin, or via the 8-oxo-pentenyladenine intermediate which itself must arise from either the prenylation of 8-oxo-AMP by FCK1 and/or oxygenation of isopentenylaldehyde. Both the FCK3 and FCK4 enzymes act downstream of the identified cytokinins to produce yet unidentified compounds. The chain is Probable glycosyltransferase FCK3 from Fusarium pseudograminearum (strain CS3096) (Wheat and barley crown-rot fungus).